The following is a 407-amino-acid chain: Chorismate synthase (407 aa).

Residues Arg43 and Arg49 each coordinate NADP(+). FMN is bound by residues 143–145 (RSS), 264–265 (QA), Gly308, 323–327 (KPIST), and Arg349.

The protein belongs to the chorismate synthase family. As to quaternary structure, homotetramer. The cofactor is FMNH2.

The enzyme catalyses 5-O-(1-carboxyvinyl)-3-phosphoshikimate = chorismate + phosphate. It functions in the pathway metabolic intermediate biosynthesis; chorismate biosynthesis; chorismate from D-erythrose 4-phosphate and phosphoenolpyruvate: step 7/7. Functionally, catalyzes the anti-1,4-elimination of the C-3 phosphate and the C-6 proR hydrogen from 5-enolpyruvylshikimate-3-phosphate (EPSP) to yield chorismate, which is the branch point compound that serves as the starting substrate for the three terminal pathways of aromatic amino acid biosynthesis. This reaction introduces a second double bond into the aromatic ring system. The sequence is that of Chorismate synthase from Corynebacterium efficiens (strain DSM 44549 / YS-314 / AJ 12310 / JCM 11189 / NBRC 100395).